A 115-amino-acid polypeptide reads, in one-letter code: DNA-directed RNA polymerase II subunit RPB11-b2 (115 aa).

Belongs to the archaeal Rpo11/eukaryotic RPB11/RPC19 RNA polymerase subunit family. Component of the RNA polymerase II (Pol II) complex consisting of 12 subunits.

The protein localises to the nucleus. In terms of biological role, DNA-dependent RNA polymerase catalyzes the transcription of DNA into RNA using the four ribonucleoside triphosphates as substrates. Component of RNA polymerase II which synthesizes mRNA precursors and many functional non-coding RNAs. Pol II is the central component of the basal RNA polymerase II transcription machinery. It is composed of mobile elements that move relative to each other. RPB11 is part of the core element with the central large cleft. The protein is DNA-directed RNA polymerase II subunit RPB11-b2 (POLR2J3) of Homo sapiens (Human).